Consider the following 327-residue polypeptide: Biotin synthase (327 aa).

The region spanning 49–282 (FNKEKIDLCS…NKVIRLCGGR (234 aa)) is the Radical SAM core domain. C67, C71, and C74 together coordinate [4Fe-4S] cluster. Residues S110, C142, C201, and R277 each coordinate [2Fe-2S] cluster.

It belongs to the radical SAM superfamily. Biotin synthase family. As to quaternary structure, homodimer. The cofactor is [4Fe-4S] cluster. [2Fe-2S] cluster is required as a cofactor.

The catalysed reaction is (4R,5S)-dethiobiotin + (sulfur carrier)-SH + 2 reduced [2Fe-2S]-[ferredoxin] + 2 S-adenosyl-L-methionine = (sulfur carrier)-H + biotin + 2 5'-deoxyadenosine + 2 L-methionine + 2 oxidized [2Fe-2S]-[ferredoxin]. The protein operates within cofactor biosynthesis; biotin biosynthesis; biotin from 7,8-diaminononanoate: step 2/2. Catalyzes the conversion of dethiobiotin (DTB) to biotin by the insertion of a sulfur atom into dethiobiotin via a radical-based mechanism. This chain is Biotin synthase, found in Methanococcus maripaludis (strain DSM 14266 / JCM 13030 / NBRC 101832 / S2 / LL).